Reading from the N-terminus, the 350-residue chain is Dihydroorotate dehydrogenase (quinone) (350 aa).

Residues 59 to 63 (AGLDK) and T83 contribute to the FMN site. K63 contributes to the substrate binding site. 108 to 112 (NRMGF) contributes to the substrate binding site. N136 and N169 together coordinate FMN. N169 contacts substrate. S172 (nucleophile) is an active-site residue. N174 contributes to the substrate binding site. K214 and T242 together coordinate FMN. A substrate-binding site is contributed by 243 to 244 (NT). FMN is bound by residues G265, G294, and 315-316 (YS).

It belongs to the dihydroorotate dehydrogenase family. Type 2 subfamily. In terms of assembly, monomer. It depends on FMN as a cofactor.

The protein localises to the cell membrane. The catalysed reaction is (S)-dihydroorotate + a quinone = orotate + a quinol. Its pathway is pyrimidine metabolism; UMP biosynthesis via de novo pathway; orotate from (S)-dihydroorotate (quinone route): step 1/1. Catalyzes the conversion of dihydroorotate to orotate with quinone as electron acceptor. In Aromatoleum aromaticum (strain DSM 19018 / LMG 30748 / EbN1) (Azoarcus sp. (strain EbN1)), this protein is Dihydroorotate dehydrogenase (quinone).